A 384-amino-acid chain; its full sequence is S-adenosylmethionine synthase (384 aa).

H15 contacts ATP. D17 contributes to the Mg(2+) binding site. Position 43 (E43) interacts with K(+). Positions 56 and 99 each coordinate L-methionine. Residues 99 to 109 (QSPDINQGVDR) are flexible loop. Residues 164–166 (DAK), 230–231 (RF), D239, 245–246 (RK), A262, and K266 contribute to the ATP site. D239 provides a ligand contact to L-methionine. K270 serves as a coordination point for L-methionine.

This sequence belongs to the AdoMet synthase family. In terms of assembly, homotetramer; dimer of dimers. Mg(2+) is required as a cofactor. It depends on K(+) as a cofactor.

Its subcellular location is the cytoplasm. It carries out the reaction L-methionine + ATP + H2O = S-adenosyl-L-methionine + phosphate + diphosphate. Its pathway is amino-acid biosynthesis; S-adenosyl-L-methionine biosynthesis; S-adenosyl-L-methionine from L-methionine: step 1/1. Catalyzes the formation of S-adenosylmethionine (AdoMet) from methionine and ATP. The overall synthetic reaction is composed of two sequential steps, AdoMet formation and the subsequent tripolyphosphate hydrolysis which occurs prior to release of AdoMet from the enzyme. In Salmonella choleraesuis (strain SC-B67), this protein is S-adenosylmethionine synthase.